We begin with the raw amino-acid sequence, 191 residues long: Large ribosomal subunit protein uL5 (191 aa).

Belongs to the universal ribosomal protein uL5 family. In terms of assembly, part of the 50S ribosomal subunit; part of the 5S rRNA/L5/L18/L25 subcomplex. Contacts the 5S rRNA and the P site tRNA. Forms a bridge to the 30S subunit in the 70S ribosome.

This is one of the proteins that bind and probably mediate the attachment of the 5S RNA into the large ribosomal subunit, where it forms part of the central protuberance. In the 70S ribosome it contacts protein S13 of the 30S subunit (bridge B1b), connecting the 2 subunits; this bridge is implicated in subunit movement. Contacts the P site tRNA; the 5S rRNA and some of its associated proteins might help stabilize positioning of ribosome-bound tRNAs. This Salinibacter ruber (strain DSM 13855 / M31) protein is Large ribosomal subunit protein uL5.